We begin with the raw amino-acid sequence, 92 residues long: Conotoxin Mr15.2 (92 aa).

The signal sequence occupies residues 1–20; sequence MSTLKMMLLILLLLLPMATF. The propeptide occupies 21–53; the sequence is DSDGQAIPGGGIPSAVNSRVGGDEKSGRSLEKR. The tract at residues 30–49 is disordered; the sequence is GGIPSAVNSRVGGDEKSGRS.

Belongs to the conotoxin N superfamily. In terms of processing, contains 4 disulfide bonds. As to expression, expressed by the venom duct.

It is found in the secreted. The polypeptide is Conotoxin Mr15.2 (Conus marmoreus (Marble cone)).